The primary structure comprises 25 residues: KLKNFAKGVAQSLLNKASCKLSGQC.

Cys-19 and Cys-25 are oxidised to a cystine.

It belongs to the frog skin active peptide (FSAP) family. Brevinin subfamily. In terms of tissue distribution, expressed by the skin glands.

It localises to the secreted. In terms of biological role, cytotoxic to cancer cells, acts via the activation of the lysosomal-mitochondrial death pathway and autophagy-like cell death. Does not show significant hemolytic activity. In Pelophylax ridibundus (Marsh frog), this protein is Brevinin-2R.